The chain runs to 510 residues: NAD(P)H-quinone oxidoreductase subunit 2, chloroplastic (510 aa).

The next 12 helical transmembrane spans lie at 24 to 44 (LLLFHGSFIFPECILIFGLIL), 59 to 79 (WFYFISSTSLVMSITALLFRW), 99 to 119 (IFQFLILLCSTLCIPLSVEYI), 124 to 144 (MAITEFLLFVLTATLGGMFLC), 149 to 169 (LITIFVAPECFSLCSYLLSGY), 184 to 204 (LLMGGASSSILVHGFSWLYGL), 229 to 249 (ISIALISITVGIGFKLSPAPF), 295 to 315 (WHLLLEILAILSMILGNLIAI), 323 to 343 (MLAYSSIGQIGYVIIGIIVGD), 347 to 367 (GYASMITYMLFYISMNLGTFA), 395 to 415 (ALSLALCLLSLGGLPPLAGFF), and 418 to 438 (LHLFWCGWQAGLYFLVSIGLL).

Belongs to the complex I subunit 2 family. NDH is composed of at least 16 different subunits, 5 of which are encoded in the nucleus.

It is found in the plastid. Its subcellular location is the chloroplast thylakoid membrane. It catalyses the reaction a plastoquinone + NADH + (n+1) H(+)(in) = a plastoquinol + NAD(+) + n H(+)(out). The enzyme catalyses a plastoquinone + NADPH + (n+1) H(+)(in) = a plastoquinol + NADP(+) + n H(+)(out). Its function is as follows. NDH shuttles electrons from NAD(P)H:plastoquinone, via FMN and iron-sulfur (Fe-S) centers, to quinones in the photosynthetic chain and possibly in a chloroplast respiratory chain. The immediate electron acceptor for the enzyme in this species is believed to be plastoquinone. Couples the redox reaction to proton translocation, and thus conserves the redox energy in a proton gradient. The protein is NAD(P)H-quinone oxidoreductase subunit 2, chloroplastic of Muilla maritima (Sea muilla).